The sequence spans 188 residues: Phosphatidylinositol N-acetylglucosaminyltransferase subunit H (188 aa).

Belongs to the PIGH family. In terms of assembly, component of the glycosylphosphatidylinositol-N-acetylglucosaminyltransferase (GPI-GnT) complex composed at least by PIGA, PIGC, PIGH, PIGP, PIGQ, PIGY and DPM2. Interacts with PIGQ.

The protein resides in the cytoplasm. It participates in glycolipid biosynthesis; glycosylphosphatidylinositol-anchor biosynthesis. Part of the glycosylphosphatidylinositol-N-acetylglucosaminyltransferase (GPI-GnT) complex that catalyzes the transfer of N-acetylglucosamine from UDP-N-acetylglucosamine to phosphatidylinositol and participates in the first step of GPI biosynthesis. In Homo sapiens (Human), this protein is Phosphatidylinositol N-acetylglucosaminyltransferase subunit H.